The following is a 147-amino-acid chain: 3-dehydroquinate dehydratase 2 (147 aa).

The active-site Proton acceptor is the Tyr23. Substrate-binding residues include Asn74, His80, and Asp87. Catalysis depends on His100, which acts as the Proton donor. Substrate-binding positions include 101–102 (IS) and Arg111.

The protein belongs to the type-II 3-dehydroquinase family. As to quaternary structure, homododecamer.

The enzyme catalyses 3-dehydroquinate = 3-dehydroshikimate + H2O. Its pathway is metabolic intermediate biosynthesis; chorismate biosynthesis; chorismate from D-erythrose 4-phosphate and phosphoenolpyruvate: step 3/7. Functionally, catalyzes a trans-dehydration via an enolate intermediate. This Agrobacterium fabrum (strain C58 / ATCC 33970) (Agrobacterium tumefaciens (strain C58)) protein is 3-dehydroquinate dehydratase 2 (aroQ2).